The chain runs to 80 residues: Small ribosomal subunit protein bS18 (80 aa).

Belongs to the bacterial ribosomal protein bS18 family. Part of the 30S ribosomal subunit. Forms a tight heterodimer with protein bS6.

Its function is as follows. Binds as a heterodimer with protein bS6 to the central domain of the 16S rRNA, where it helps stabilize the platform of the 30S subunit. This is Small ribosomal subunit protein bS18 from Methylocella silvestris (strain DSM 15510 / CIP 108128 / LMG 27833 / NCIMB 13906 / BL2).